Here is a 755-residue protein sequence, read N- to C-terminus: Tryptophan 2-monooxygenase (755 aa).

Residues serine 247, glutamate 267, lysine 275, and arginine 295 each coordinate FMN. Residue arginine 295 participates in substrate binding.

The protein belongs to the tryptophan 2-monooxygenase family. It depends on FMN as a cofactor.

The enzyme catalyses L-tryptophan + O2 = indole-3-acetamide + CO2 + H2O. It participates in plant hormone metabolism; auxin biosynthesis. The polypeptide is Tryptophan 2-monooxygenase (iaaM) (Agrobacterium vitis (Rhizobium vitis)).